The primary structure comprises 371 residues: MYNETPIKRRPSTRIYVGNVPIGDGAPIAVQSMTNTKTTDVEATIAQIRALEKVGADIVRVSVPTMDAAEAFKLIKQAVNVPLVADIHFDYRIALKVAEYGVDCLRINPGNIGNEERIRSVVECARDHNIPIRIGVNGGSLEKDLMDKYKEPTPQALLESAMRHVDILDRLNFDQFKVSVKASDVFLAVESYRLLAKQIRQPLHLGITEAGGARAGSVKSAVGLGMLLAEGIGDTLRISLAADPVEEIKVGFDILKSLRIRSRGINFIACPSCSRQEFDVISTVNELERRLEDVTTAMDVSIIGCVVNGPGEALVSHIGLTGGHNKSGYYDEGERQKERFDNDNIVDSLEAKIRAKASQMANRIQIKDTTE.

The [4Fe-4S] cluster site is built by C270, C273, C305, and E312.

It belongs to the IspG family. It depends on [4Fe-4S] cluster as a cofactor.

The catalysed reaction is (2E)-4-hydroxy-3-methylbut-2-enyl diphosphate + oxidized [flavodoxin] + H2O + 2 H(+) = 2-C-methyl-D-erythritol 2,4-cyclic diphosphate + reduced [flavodoxin]. The protein operates within isoprenoid biosynthesis; isopentenyl diphosphate biosynthesis via DXP pathway; isopentenyl diphosphate from 1-deoxy-D-xylulose 5-phosphate: step 5/6. Its function is as follows. Converts 2C-methyl-D-erythritol 2,4-cyclodiphosphate (ME-2,4cPP) into 1-hydroxy-2-methyl-2-(E)-butenyl 4-diphosphate. This chain is 4-hydroxy-3-methylbut-2-en-1-yl diphosphate synthase (flavodoxin), found in Shewanella baltica (strain OS223).